The following is a 180-amino-acid chain: ATP synthase subunit delta (180 aa).

It belongs to the ATPase delta chain family. F-type ATPases have 2 components, F(1) - the catalytic core - and F(0) - the membrane proton channel. F(1) has five subunits: alpha(3), beta(3), gamma(1), delta(1), epsilon(1). F(0) has three main subunits: a(1), b(2) and c(10-14). The alpha and beta chains form an alternating ring which encloses part of the gamma chain. F(1) is attached to F(0) by a central stalk formed by the gamma and epsilon chains, while a peripheral stalk is formed by the delta and b chains.

It localises to the cell membrane. In terms of biological role, f(1)F(0) ATP synthase produces ATP from ADP in the presence of a proton or sodium gradient. F-type ATPases consist of two structural domains, F(1) containing the extramembraneous catalytic core and F(0) containing the membrane proton channel, linked together by a central stalk and a peripheral stalk. During catalysis, ATP synthesis in the catalytic domain of F(1) is coupled via a rotary mechanism of the central stalk subunits to proton translocation. Functionally, this protein is part of the stalk that links CF(0) to CF(1). It either transmits conformational changes from CF(0) to CF(1) or is implicated in proton conduction. The protein is ATP synthase subunit delta of Lactobacillus delbrueckii subsp. bulgaricus (strain ATCC BAA-365 / Lb-18).